The sequence spans 485 residues: Glutamyl-tRNA(Gln) amidotransferase subunit A (485 aa).

Active-site charge relay system residues include lysine 79 and serine 154. Residue serine 178 is the Acyl-ester intermediate of the active site.

Belongs to the amidase family. GatA subfamily. In terms of assembly, heterotrimer of A, B and C subunits.

The enzyme catalyses L-glutamyl-tRNA(Gln) + L-glutamine + ATP + H2O = L-glutaminyl-tRNA(Gln) + L-glutamate + ADP + phosphate + H(+). In terms of biological role, allows the formation of correctly charged Gln-tRNA(Gln) through the transamidation of misacylated Glu-tRNA(Gln) in organisms which lack glutaminyl-tRNA synthetase. The reaction takes place in the presence of glutamine and ATP through an activated gamma-phospho-Glu-tRNA(Gln). The protein is Glutamyl-tRNA(Gln) amidotransferase subunit A of Clostridium botulinum (strain Kyoto / Type A2).